A 384-amino-acid chain; its full sequence is Urotensin-2 receptor (384 aa).

Over 1–54 the chain is Extracellular; that stretch reads MALSPEPSSRFLVPATMGSAMPELPGAPNASLNSSLASPTEPNSLEDLVATGTI. Residues asparagine 29 and asparagine 33 are each glycosylated (N-linked (GlcNAc...) asparagine). A helical membrane pass occupies residues 55–77; it reads GVVLSAMGVVGMAGNVYTLTVMC. The Cytoplasmic portion of the chain corresponds to 78–87; the sequence is RFLHTSASMY. Residues 88 to 113 form a helical membrane-spanning segment; the sequence is VYVINLALADLLYLLSIPFIVATYVT. At 114 to 124 the chain is on the extracellular side; it reads KRWHFGDVGCR. Cysteines 123 and 199 form a disulfide. Residues 125–146 traverse the membrane as a helical segment; sequence VLFSLDFLTMHASIFTLTLMSR. Topologically, residues 147–167 are cytoplasmic; that stretch reads ERYAAVVRPLDTVQRSKGYRK. The helical transmembrane segment at 168–186 threads the bilayer; the sequence is VLALGTWLLALLLALPMML. At 187-209 the chain is on the extracellular side; that stretch reads AIRLVRRGHKSLCLPAWGQRTHR. Residues 210-232 form a helical membrane-spanning segment; that stretch reads AYLTLLFGTSIVGPGVVIGLLYV. The Cytoplasmic segment spans residues 233 to 259; it reads RLARAYWLSQRSSFTQTRRLPNPRVLY. The chain crosses the membrane as a helical span at residues 260-285; sequence LILGIVLLFWACFLPFWLWQLLAQYR. Topologically, residues 286–299 are extracellular; sequence GAPPLAPRSARIVN. A helical transmembrane segment spans residues 300-320; that stretch reads YLTTCLTYGNSCVNPFLYTLL. Residues 321 to 384 lie on the Cytoplasmic side of the membrane; sequence TKNYRDYRQR…SQAVPGSLCV (64 aa).

Belongs to the G-protein coupled receptor 1 family. As to expression, expressed in neural tissue, including sensory epithelia.

It is found in the cell membrane. High affinity receptor for urotensin-2 and urotensin-2B. The activity of this receptor is mediated by a G-protein that activate a phosphatidylinositol-calcium second messenger system. The protein is Urotensin-2 receptor (UTS2R) of Bos taurus (Bovine).